Consider the following 247-residue polypeptide: Adenosylcobinamide-GDP ribazoletransferase (247 aa).

The next 6 membrane-spanning stretches (helical) occupy residues 34 to 54 (IVMFPFIGLILGGISGLIFIL), 59 to 79 (CGIPLAALFCILALALLTGGF), 113 to 133 (GGLALIFVLLAKILVVSELAL), 138 to 158 (MLAALAVACAAGHGSAVLLMY), 171 to 191 (VFIGKVSGRQTCITLGLAVIV), and 194 to 214 (VLLPGMQGLATMVVTLAAIFI).

Belongs to the CobS family. Mg(2+) serves as cofactor.

It is found in the cell inner membrane. The enzyme catalyses alpha-ribazole + adenosylcob(III)inamide-GDP = adenosylcob(III)alamin + GMP + H(+). It catalyses the reaction alpha-ribazole 5'-phosphate + adenosylcob(III)inamide-GDP = adenosylcob(III)alamin 5'-phosphate + GMP + H(+). It functions in the pathway cofactor biosynthesis; adenosylcobalamin biosynthesis; adenosylcobalamin from cob(II)yrinate a,c-diamide: step 7/7. In terms of biological role, joins adenosylcobinamide-GDP and alpha-ribazole to generate adenosylcobalamin (Ado-cobalamin). Also synthesizes adenosylcobalamin 5'-phosphate from adenosylcobinamide-GDP and alpha-ribazole 5'-phosphate. In Salmonella paratyphi A (strain ATCC 9150 / SARB42), this protein is Adenosylcobinamide-GDP ribazoletransferase.